The sequence spans 242 residues: Uridylate kinase (242 aa).

Residue 12 to 15 participates in ATP binding; it reads KLSG. An involved in allosteric activation by GTP region spans residues 20 to 25; the sequence is GQKGYG. UMP is bound at residue Gly54. Positions 55 and 59 each coordinate ATP. Residues Asp74 and 135-142 each bind UMP; that span reads TGNPYFST. ATP is bound by residues Gln163, Tyr168, and Asp171.

Belongs to the UMP kinase family. In terms of assembly, homohexamer.

Its subcellular location is the cytoplasm. It carries out the reaction UMP + ATP = UDP + ADP. The protein operates within pyrimidine metabolism; CTP biosynthesis via de novo pathway; UDP from UMP (UMPK route): step 1/1. With respect to regulation, allosterically activated by GTP. Inhibited by UTP. In terms of biological role, catalyzes the reversible phosphorylation of UMP to UDP. The chain is Uridylate kinase from Desulforamulus reducens (strain ATCC BAA-1160 / DSM 100696 / MI-1) (Desulfotomaculum reducens).